The following is a 147-amino-acid chain: Large ribosomal subunit protein bL9 (147 aa).

Belongs to the bacterial ribosomal protein bL9 family.

In terms of biological role, binds to the 23S rRNA. This is Large ribosomal subunit protein bL9 from Helicobacter hepaticus (strain ATCC 51449 / 3B1).